The primary structure comprises 142 residues: Transcriptional regulator MraZ (142 aa).

SpoVT-AbrB domains lie at 5–46 (THPV…DRSE) and 75–118 (AAAQ…DSEA).

Belongs to the MraZ family. In terms of assembly, forms oligomers.

It is found in the cytoplasm. The protein localises to the nucleoid. The protein is Transcriptional regulator MraZ of Tropheryma whipplei (strain TW08/27) (Whipple's bacillus).